Consider the following 272-residue polypeptide: 3-methyl-2-oxobutanoate hydroxymethyltransferase (272 aa).

Mg(2+)-binding residues include aspartate 54 and aspartate 93. 3-methyl-2-oxobutanoate is bound by residues 54–55 (DS), aspartate 93, and lysine 123. Position 125 (glutamate 125) interacts with Mg(2+). Glutamate 190 (proton acceptor) is an active-site residue.

It belongs to the PanB family. In terms of assembly, homodecamer; pentamer of dimers. Requires Mg(2+) as cofactor.

It localises to the cytoplasm. It carries out the reaction 3-methyl-2-oxobutanoate + (6R)-5,10-methylene-5,6,7,8-tetrahydrofolate + H2O = 2-dehydropantoate + (6S)-5,6,7,8-tetrahydrofolate. Its pathway is cofactor biosynthesis; (R)-pantothenate biosynthesis; (R)-pantoate from 3-methyl-2-oxobutanoate: step 1/2. Its function is as follows. Catalyzes the reversible reaction in which hydroxymethyl group from 5,10-methylenetetrahydrofolate is transferred onto alpha-ketoisovalerate to form ketopantoate. This Tropheryma whipplei (strain Twist) (Whipple's bacillus) protein is 3-methyl-2-oxobutanoate hydroxymethyltransferase.